The sequence spans 356 residues: sn-glycerol-3-phosphate import ATP-binding protein UgpC (356 aa).

Positions 4–235 (LKLQAVTKSW…PASLFVASFI (232 aa)) constitute an ABC transporter domain. Position 37–44 (37–44 (GPSGCGKS)) interacts with ATP.

It belongs to the ABC transporter superfamily. sn-glycerol-3-phosphate importer (TC 3.A.1.1.3) family. The complex is composed of two ATP-binding proteins (UgpC), two transmembrane proteins (UgpA and UgpE) and a solute-binding protein (UgpB).

The protein localises to the cell inner membrane. The catalysed reaction is sn-glycerol 3-phosphate(out) + ATP + H2O = sn-glycerol 3-phosphate(in) + ADP + phosphate + H(+). Functionally, part of the ABC transporter complex UgpBAEC involved in sn-glycerol-3-phosphate (G3P) import. Responsible for energy coupling to the transport system. This is sn-glycerol-3-phosphate import ATP-binding protein UgpC from Escherichia coli O157:H7.